A 20-amino-acid polypeptide reads, in one-letter code: Cytochrome c oxidase subunit 5B heart, mitochondrial (20 aa).

The interval X1–A20 is disordered.

The protein belongs to the cytochrome c oxidase subunit 5B family. As to quaternary structure, component of the cytochrome c oxidase (complex IV, CIV), a multisubunit enzyme composed of 14 subunits. The complex is composed of a catalytic core of 3 subunits MT-CO1, MT-CO2 and MT-CO3, encoded in the mitochondrial DNA, and 11 supernumerary subunits COX4I, COX5A, COX5B, COX6A, COX6B, COX6C, COX7A, COX7B, COX7C, COX8 and NDUFA4, which are encoded in the nuclear genome. The complex exists as a monomer or a dimer and forms supercomplexes (SCs) in the inner mitochondrial membrane with NADH-ubiquinone oxidoreductase (complex I, CI) and ubiquinol-cytochrome c oxidoreductase (cytochrome b-c1 complex, complex III, CIII), resulting in different assemblies (supercomplex SCI(1)III(2)IV(1) and megacomplex MCI(2)III(2)IV(2)).

It is found in the mitochondrion inner membrane. It functions in the pathway energy metabolism; oxidative phosphorylation. Component of the cytochrome c oxidase, the last enzyme in the mitochondrial electron transport chain which drives oxidative phosphorylation. The respiratory chain contains 3 multisubunit complexes succinate dehydrogenase (complex II, CII), ubiquinol-cytochrome c oxidoreductase (cytochrome b-c1 complex, complex III, CIII) and cytochrome c oxidase (complex IV, CIV), that cooperate to transfer electrons derived from NADH and succinate to molecular oxygen, creating an electrochemical gradient over the inner membrane that drives transmembrane transport and the ATP synthase. Cytochrome c oxidase is the component of the respiratory chain that catalyzes the reduction of oxygen to water. Electrons originating from reduced cytochrome c in the intermembrane space (IMS) are transferred via the dinuclear copper A center (CU(A)) of subunit 2 and heme A of subunit 1 to the active site in subunit 1, a binuclear center (BNC) formed by heme A3 and copper B (CU(B)). The BNC reduces molecular oxygen to 2 water molecules using 4 electrons from cytochrome c in the IMS and 4 protons from the mitochondrial matrix. This Oncorhynchus mykiss (Rainbow trout) protein is Cytochrome c oxidase subunit 5B heart, mitochondrial.